Reading from the N-terminus, the 215-residue chain is LexA repressor (215 aa).

The H-T-H motif DNA-binding region spans 28-48; it reads RAEIAAELGFSSPNAAEEHLR. Catalysis depends on for autocatalytic cleavage activity residues serine 133 and lysine 170.

Belongs to the peptidase S24 family. In terms of assembly, homodimer.

It carries out the reaction Hydrolysis of Ala-|-Gly bond in repressor LexA.. Its function is as follows. Represses a number of genes involved in the response to DNA damage (SOS response), including recA and lexA. In the presence of single-stranded DNA, RecA interacts with LexA causing an autocatalytic cleavage which disrupts the DNA-binding part of LexA, leading to derepression of the SOS regulon and eventually DNA repair. The polypeptide is LexA repressor (Burkholderia thailandensis (strain ATCC 700388 / DSM 13276 / CCUG 48851 / CIP 106301 / E264)).